A 625-amino-acid polypeptide reads, in one-letter code: Cytochrome c oxidase subunit 1 (625 aa).

The helical transmembrane segment at 23-43 (IAIMYLIAGTLFFVKAGVMAL) threads the bilayer. H69 contacts Fe(II)-heme a. The next 6 membrane-spanning stretches (helical) occupy residues 72–92 (IMLF…VIPL), 99–119 (VAFP…GLLL), 151–171 (FYVL…INFL), 195–215 (FISS…LALL), 240–260 (IFWI…FGII), and 272–292 (LFGY…GFMV). The Cu cation site is built by H246 and Y250. A cross-link (1'-histidyl-3'-tyrosine (His-Tyr)) is located at residues 246-250 (HPEVY). H295 and H296 together coordinate Cu cation. 2 helical membrane-spanning segments follow: residues 309–329 (IFAV…FNWL) and 343–363 (MLFA…GVML). H381 contributes to the heme a3 binding site. 5 helical membrane-spanning segments follow: residues 382–402 (FHYI…FYWY), 417–437 (LFFW…HLLG), 460–480 (ISTI…INVI), 551–571 (SILP…LIML), and 577–597 (IINP…CMFV). H383 serves as a coordination point for Fe(II)-heme a.

Belongs to the heme-copper respiratory oxidase family.

It localises to the cell membrane. The enzyme catalyses 4 Fe(II)-[cytochrome c] + O2 + 8 H(+)(in) = 4 Fe(III)-[cytochrome c] + 2 H2O + 4 H(+)(out). The protein operates within energy metabolism; oxidative phosphorylation. Cytochrome c oxidase is the component of the respiratory chain that catalyzes the reduction of oxygen to water. Subunits 1-3 form the functional core of the enzyme complex. CO I is the catalytic subunit of the enzyme. Electrons originating in cytochrome c are transferred via the copper A center of subunit 2 and heme A of subunit 1 to the bimetallic center formed by heme A3 and copper B. The chain is Cytochrome c oxidase subunit 1 (ctaD) from Alkalihalophilus pseudofirmus (strain ATCC BAA-2126 / JCM 17055 / OF4) (Bacillus pseudofirmus).